Here is a 480-residue protein sequence, read N- to C-terminus: Dihydrolipoyllysine-residue acetyltransferase component 4 of pyruvate dehydrogenase complex, chloroplastic (480 aa).

Residues 1–53 constitute a chloroplast transit peptide; the sequence is MAVSSSSFLSTASLTNSKSNISFASSVSPSLRSVVFRSTTPATSHRRSMTVRS. The Lipoyl-binding domain occupies 55 to 133; sequence IREIFMPALS…AAIGLLAETE (79 aa). K96 carries the N6-lipoyllysine modification. 2 disordered regions span residues 140–168 and 224–245; these read KSKA…SPAP and AGIA…PVTA. The segment covering 142-156 has biased composition (low complexity); it reads KAASKSSSSVAEAVV. The Peripheral subunit-binding (PSBD) domain maps to 187–224; it reads VATPYAKKLAKQHKVDIESVAGTGPFGRITASDVETAA. The span at 234 to 243 shows a compositional bias: pro residues; sequence APPPPPPPPV. H453 is a catalytic residue.

This sequence belongs to the 2-oxoacid dehydrogenase family. It depends on (R)-lipoate as a cofactor.

It localises to the plastid. Its subcellular location is the chloroplast stroma. It catalyses the reaction N(6)-[(R)-dihydrolipoyl]-L-lysyl-[protein] + acetyl-CoA = N(6)-[(R)-S(8)-acetyldihydrolipoyl]-L-lysyl-[protein] + CoA. Functionally, the pyruvate dehydrogenase complex catalyzes the overall conversion of pyruvate to acetyl-CoA and CO(2). It contains multiple copies of three enzymatic components: pyruvate dehydrogenase (E1), dihydrolipoamide acetyltransferase (E2) and lipoamide dehydrogenase (E3). The protein is Dihydrolipoyllysine-residue acetyltransferase component 4 of pyruvate dehydrogenase complex, chloroplastic (LTA2) of Arabidopsis thaliana (Mouse-ear cress).